The primary structure comprises 209 residues: Pyridoxal phosphate homeostasis protein (209 aa).

N6-(pyridoxal phosphate)lysine is present on K31.

Belongs to the pyridoxal phosphate-binding protein YggS/PROSC family.

Pyridoxal 5'-phosphate (PLP)-binding protein, which is involved in PLP homeostasis. The chain is Pyridoxal phosphate homeostasis protein from Deinococcus radiodurans (strain ATCC 13939 / DSM 20539 / JCM 16871 / CCUG 27074 / LMG 4051 / NBRC 15346 / NCIMB 9279 / VKM B-1422 / R1).